Reading from the N-terminus, the 519-residue chain is Flavonoid 8-hydroxylase 2, chloroplastic (519 aa).

Residues 1-46 (MEVLQASSLSFQLLRRHSRNNLINKFRNPSLPRIHMPRQNIDLKTF) constitute a chloroplast transit peptide. Residues 77–188 (WYPVASVCDL…SCVRNGIVWF (112 aa)) form the Rieske domain. C119, H121, C139, and H142 together coordinate [2Fe-2S] cluster. Fe cation contacts are provided by H241 and H246. A Redox-active motif motif is present at residues 447 to 450 (CSSC). The next 2 helical transmembrane spans lie at 462–478 (IGLQAMSLVFVAMAAAV) and 485–501 (YSMVAMAVLSFLASKWL).

[2Fe-2S] cluster serves as cofactor. In terms of tissue distribution, glandular trichome-specific expression in leaves.

It is found in the plastid. The protein resides in the chloroplast membrane. Its subcellular location is the cytoplasm. The enzyme catalyses salvigenin + 2 reduced [2Fe-2S]-[ferredoxin] + O2 + 2 H(+) = 8-hydroxysalvigenin + 2 oxidized [2Fe-2S]-[ferredoxin] + H2O. The protein operates within flavonoid metabolism. In terms of biological role, rieske-type, PAO-family oxygenase involved in the biosynthesis of polymethoxylated flavonoids natural products such as nevadensin and salvigenin, aroma compounds which contribute to the flavor of sweet basil, and exhibit pharmacological activities such as anti-allergic, anti-oxidant, antibacterial, anti-proliferative, and anti-inflammatory effects. Catalyzes the hydroxylation of salvigenin to produce 8-hydroxysalvigenin (8-OH-SALV). This is Flavonoid 8-hydroxylase 2, chloroplastic from Ocimum basilicum (Sweet basil).